We begin with the raw amino-acid sequence, 485 residues long: Protein disulfide-isomerase 1 (485 aa).

A signal peptide spans 1–20 (MSLSVSFIFLLVASIGAVVA). Thioredoxin domains are found at residues 21–130 (DSEN…KKSG) and 342–470 (YLEG…KYAG). Intrachain disulfides connect Cys-52/Cys-55 and Cys-393/Cys-396. Active-site nucleophile residues include Cys-393 and Cys-396. The Prevents secretion from ER signature appears at 482 to 485 (HEEL).

The protein belongs to the protein disulfide isomerase family.

Its subcellular location is the endoplasmic reticulum lumen. It catalyses the reaction Catalyzes the rearrangement of -S-S- bonds in proteins.. The sequence is that of Protein disulfide-isomerase 1 (pdi-1) from Caenorhabditis elegans.